A 196-amino-acid chain; its full sequence is MIDFDGYRPNVGIVICNRKGQVLWAKRCGQNSWQFPQGGINDNESAEQAMYRELHEEVGLQPKDVRLLYVSKHWLRYKLPKRLLRYDSKPMCIGQKQRWFLLQLVSDEKNINMQTTKSPEFDGWRWVSFWYPVRQVVSFKRDVYRKVMKEFASILFTDNPLIFSASREASLQHYSANKKYSQTKYTKRHFYKSRGQ.

One can recognise a Nudix hydrolase domain in the interval 6–149 (GYRPNVGIVI…KRDVYRKVMK (144 aa)). A Nudix box motif is present at residues 38 to 59 (GGINDNESAEQAMYRELHEEVG).

This sequence belongs to the Nudix hydrolase family. RppH subfamily. It depends on a divalent metal cation as a cofactor.

Its function is as follows. Accelerates the degradation of transcripts by removing pyrophosphate from the 5'-end of triphosphorylated RNA, leading to a more labile monophosphorylated state that can stimulate subsequent ribonuclease cleavage. The sequence is that of RNA pyrophosphohydrolase from Haemophilus influenzae (strain PittEE).